The primary structure comprises 277 residues: Release factor glutamine methyltransferase (277 aa).

Residues 119–123 (GTGCG), aspartate 142, tryptophan 170, and asparagine 184 contribute to the S-adenosyl-L-methionine site. 184-187 (NPPY) contributes to the substrate binding site.

This sequence belongs to the protein N5-glutamine methyltransferase family. PrmC subfamily.

It carries out the reaction L-glutaminyl-[peptide chain release factor] + S-adenosyl-L-methionine = N(5)-methyl-L-glutaminyl-[peptide chain release factor] + S-adenosyl-L-homocysteine + H(+). In terms of biological role, methylates the class 1 translation termination release factors RF1/PrfA and RF2/PrfB on the glutamine residue of the universally conserved GGQ motif. The sequence is that of Release factor glutamine methyltransferase from Buchnera aphidicola subsp. Baizongia pistaciae (strain Bp).